Consider the following 240-residue polypeptide: 4-hydroxy-tetrahydrodipicolinate reductase (240 aa).

Residues 79-81 (ATT) and 103-106 (SANM) contribute to the NAD(+) site. The active-site Proton donor/acceptor is the H135. H136 serves as a coordination point for (S)-2,3,4,5-tetrahydrodipicolinate. K139 serves as the catalytic Proton donor. Residue 145 to 146 (GT) participates in (S)-2,3,4,5-tetrahydrodipicolinate binding.

This sequence belongs to the DapB family.

It is found in the cytoplasm. It catalyses the reaction (S)-2,3,4,5-tetrahydrodipicolinate + NAD(+) + H2O = (2S,4S)-4-hydroxy-2,3,4,5-tetrahydrodipicolinate + NADH + H(+). The enzyme catalyses (S)-2,3,4,5-tetrahydrodipicolinate + NADP(+) + H2O = (2S,4S)-4-hydroxy-2,3,4,5-tetrahydrodipicolinate + NADPH + H(+). The protein operates within amino-acid biosynthesis; L-lysine biosynthesis via DAP pathway; (S)-tetrahydrodipicolinate from L-aspartate: step 4/4. Its function is as follows. Catalyzes the conversion of 4-hydroxy-tetrahydrodipicolinate (HTPA) to tetrahydrodipicolinate. This is 4-hydroxy-tetrahydrodipicolinate reductase from Staphylococcus aureus (strain bovine RF122 / ET3-1).